A 469-amino-acid polypeptide reads, in one-letter code: Acyltransferase clz18 (469 aa).

7 helical membrane-spanning segments follow: residues 21–41 (GLLS…LGYD), 70–90 (LFTI…CLFF), 134–154 (LSLL…TGFF), 253–273 (ILAA…PLFW), 346–366 (GLIV…LYSL), 391–411 (IYLI…SWVW), and 424–444 (VGFG…AAIF).

Belongs to the acyltransferase 3 family.

Its subcellular location is the membrane. It participates in secondary metabolite biosynthesis. Acyltransferase; part of the gene cluster that mediates the biosynthesis of squalestatin S1 (SQS1, also known as zaragozic acid A), a heavily oxidized fungal polyketide that offers potent cholesterol lowering activity by targeting squalene synthase (SS). SQS1 is composed of a 2,8-dioxobicyclic[3.2.1]octane-3,4,5-tricarboxyclic acid core that is connected to two lipophilic polyketide arms. These initial steps feature the priming of an unusual benzoic acid starter unit onto the highly reducing polyketide synthase clz14, followed by oxaloacetate extension and product release to generate a tricarboxylic acid containing product. The phenylalanine ammonia lyase (PAL) clz10 and the acyl-CoA ligase clz12 are involved in transforming phenylalanine into benzoyl-CoA. The citrate synthase-like protein clz17 is involved in connecting the C-alpha-carbons of the hexaketide chain and oxaloacetate to afford the tricarboxylic acid unit. The potential hydrolytic enzymes, clz11 and clz13, are in close proximity to pks2 and may participate in product release. On the other side, the tetraketide arm is synthesized by a the squalestatin tetraketide synthase clz2 and enzymatically esterified to the core in the last biosynthetic step, by the acetyltransferase clz6. The biosynthesis of the tetraketide must involve 3 rounds of chain extension. After the first and second rounds methyl-transfer occurs, and in all rounds of extension the ketoreductase and dehydratase are active. The enoyl reductase and C-MeT of clz2 are not active in the final round of extension. The acetyltransferase clz6 appears to have a broad substrate selectivity for its acyl CoA substrate, allowing the in vitro synthesis of novel squalestatins. The biosynthesis of SQS1 requires several oxidative steps likely performed by oxidoreductases clz3, clz15 and clz16. Finally, in support of the identification of the cluster as being responsible for SQS1 production, the cluster contains a gene encoding a putative squalene synthase (SS) clz20, suggesting a likely mechanism for self-resistance. This Cochliobolus lunatus (Filamentous fungus) protein is Acyltransferase clz18.